The chain runs to 202 residues: MEHYISIFVRSIFMENMALAFFLGMCTFLAVSKKVKTSMGLGVAVIVVLGISVPVNQIIYFNLLAPGALAWAGFPAADLSFLGFITFIGVIAALVQILEMVLDKYFPALYQALGIYLPLITVNCAILGGVLFMVQREYNLMESLVYGVGSGVGWMLAIVLLAGIREKMKYSDVPAGLRGLGITFTTAGLMAIAFMSFSGIQL.

A run of 6 helical transmembrane segments spans residues Ser-11–Val-31, Leu-41–Phe-61, Phe-81–Val-101, Gly-114–Val-134, Leu-144–Ile-164, and Leu-180–Ile-200.

Belongs to the NqrDE/RnfAE family. In terms of assembly, composed of six subunits; NqrA, NqrB, NqrC, NqrD, NqrE and NqrF.

The protein localises to the cell inner membrane. It carries out the reaction a ubiquinone + n Na(+)(in) + NADH + H(+) = a ubiquinol + n Na(+)(out) + NAD(+). Its function is as follows. NQR complex catalyzes the reduction of ubiquinone-1 to ubiquinol by two successive reactions, coupled with the transport of Na(+) ions from the cytoplasm to the periplasm. NqrA to NqrE are probably involved in the second step, the conversion of ubisemiquinone to ubiquinol. The polypeptide is Na(+)-translocating NADH-quinone reductase subunit E (Psychromonas ingrahamii (strain DSM 17664 / CCUG 51855 / 37)).